The sequence spans 134 residues: MDFWKFFPFLALSSMWVLCLASSLQAAPFRSALESSLDLGTLSDQEKHLLLAALIQDYEQKARKLEQEEQETEGSRKGSSSSVISQKRSCNTATCVTHRLAGLLRRSGGVVKDNFVPTNVGSKAFGRRRRDLRV.

An N-terminal signal peptide occupies residues 1-26 (MDFWKFFPFLALSSMWVLCLASSLQA). Positions 27–86 (APFRSALESSLDLGTLSDQEKHLLLAALIQDYEQKARKLEQEEQETEGSRKGSSSSVISQ) are excised as a propeptide. A disordered region spans residues 65–91 (LEQEEQETEGSRKGSSSSVISQKRSCN). Positions 77–89 (KGSSSSVISQKRS) are enriched in low complexity. C90 and C95 are joined by a disulfide. F125 is subject to Phenylalanine amide. The propeptide occupies 131–134 (DLRV).

Belongs to the calcitonin family.

It localises to the secreted. Its function is as follows. CALCB/CGRP2 is a peptide hormone that induces vasodilation mediated by the CALCRL-RAMP1 receptor complex. Dilates a variety of vessels including the coronary, cerebral and systemic vasculature. Its abundance in the CNS also points toward a neurotransmitter or neuromodulator role. The chain is Calcitonin gene-related peptide 2 from Rattus norvegicus (Rat).